Here is a 582-residue protein sequence, read N- to C-terminus: MSGGDGRGHNTGAHSTSGNINGGPTGIGVSGGASDGSGWSSENNPWGGGSGSGIHWGGGSGRGNGGGNGNSGGGSGTGGNLSAVAAPVAFGFPALSTPGAGGLAVSISASELSAAIAGIIAKLKKVNLKFTPFGVVLSSLIPSEIAKDDPNMMSKIVTSLPADDITESPVSSLPLDKATVNVNVRVVDDVKDERQNISVVSGVPMSVPVVDAKPTERPGVFTASIPGAPVLNISVNDSTPAVQTLSPGVTNNTDKDVRPAGFTQGGNTRDAVIRFPKDSGHNAVYVSVSDVLSPDQVKQRQDEENRRQQEWDATHPVEAAERNYERARAELNQANEDVARNQERQAKAVQVYNSRKSELDAANKTLADAIAEIKQFNRFAHDPMAGGHRMWQMAGLKAQRAQTDVNNKQAAFDAAAKEKSDADAALSAAQERRKQKENKEKDAKDKLDKESKRNKPGKATGKGKPVGDKWLDDAGKDSGAPIPDRIADKLRDKEFKSFDDFRKAVWEEVSKDPELSKNLNPSNKSSVSKGYSPFTPKNQQVGGRKVYELHHDKPISQGGEVYDMDNIRVTTPKRHIDIHRGK.

5 disordered regions span residues 1-74 (MSGG…SGGG), 246-270 (SPGVTNNTDKDVRPAGFTQGGNTRD), 294-321 (PDQVKQRQDEENRRQQEWDATHPVEAAE), 422-489 (ADAA…IADK), and 510-542 (SKDPELSKNLNPSNKSSVSKGYSPFTPKNQQVG). Residues 20-35 (INGGPTGIGVSGGASD) are compositionally biased toward gly residues. Positions 36–45 (GSGWSSENNP) are enriched in low complexity. Positions 46-74 (WGGGSGSGIHWGGGSGRGNGGGNGNSGGG) are enriched in gly residues. Basic and acidic residues-rich tracts occupy residues 297–321 (VKQRQDEENRRQQEWDATHPVEAAE), 430–453 (QERRKQKENKEKDAKDKLDKESKR), and 465–476 (PVGDKWLDDAGK). Residues 516-529 (SKNLNPSNKSSVSK) are compositionally biased toward low complexity. Residues histidine 550, histidine 575, and histidine 579 each contribute to the Zn(2+) site.

Belongs to the colicin/pyosin nuclease family.

This plasmid-coded bactericidal protein is an endonuclease active on both single- and double-stranded DNA but with undefined specificity. In terms of biological role, colicins are polypeptide toxins produced by and active against E.coli and closely related bacteria. This chain is Colicin-E9 (col), found in Escherichia coli.